The sequence spans 208 residues: Uracil phosphoribosyltransferase (208 aa).

5-phospho-alpha-D-ribose 1-diphosphate-binding positions include R78, R103, and 130-138 (DPMLATANS). Uracil-binding positions include I193 and 198–200 (GDA). D199 is a 5-phospho-alpha-D-ribose 1-diphosphate binding site.

It belongs to the UPRTase family. Mg(2+) serves as cofactor.

It carries out the reaction UMP + diphosphate = 5-phospho-alpha-D-ribose 1-diphosphate + uracil. It functions in the pathway pyrimidine metabolism; UMP biosynthesis via salvage pathway; UMP from uracil: step 1/1. Allosterically activated by GTP. Its function is as follows. Catalyzes the conversion of uracil and 5-phospho-alpha-D-ribose 1-diphosphate (PRPP) to UMP and diphosphate. The sequence is that of Uracil phosphoribosyltransferase from Brucella canis (strain ATCC 23365 / NCTC 10854 / RM-666).